We begin with the raw amino-acid sequence, 446 residues long: Na(+)-translocating NADH-quinone reductase subunit A (446 aa).

The protein belongs to the NqrA family. As to quaternary structure, composed of six subunits; NqrA, NqrB, NqrC, NqrD, NqrE and NqrF.

It carries out the reaction a ubiquinone + n Na(+)(in) + NADH + H(+) = a ubiquinol + n Na(+)(out) + NAD(+). NQR complex catalyzes the reduction of ubiquinone-1 to ubiquinol by two successive reactions, coupled with the transport of Na(+) ions from the cytoplasm to the periplasm. NqrA to NqrE are probably involved in the second step, the conversion of ubisemiquinone to ubiquinol. The chain is Na(+)-translocating NADH-quinone reductase subunit A from Pasteurella multocida (strain Pm70).